Reading from the N-terminus, the 514-residue chain is Uridylate cyclase (514 aa).

Guanylate cyclase domains follow at residues 49 to 190 (VHMY…AKLA) and 286 to 428 (VSLY…EKRQ). Residues Tyr52, Arg105, Phe178, 184–188 (NHAAK), and 291–296 (DIDGFT) contribute to the a ribonucleoside 5'-triphosphate site. Positions 291, 292, and 339 each coordinate Ca(2+). Mn(2+) is bound at residue Asp291. The disordered stretch occupies residues 495–514 (IRADERQVQPHSRQKVDGSR). A compositionally biased stretch (basic and acidic residues) spans 496 to 514 (RADERQVQPHSRQKVDGSR).

Belongs to the adenylyl cyclase class-4/guanylyl cyclase family. Pyrimidine cyclase subfamily. Monomer. The cofactor is a divalent metal cation.

It is found in the cytoplasm. It catalyses the reaction UTP = 3',5'-cyclic UMP + diphosphate. In terms of biological role, pycsar (pyrimidine cyclase system for antiphage resistance) provides immunity against bacteriophage. The pyrimidine cyclase (PycC) synthesizes cyclic nucleotides in response to infection; these serve as specific second messenger signals. The signals activate the adjacent effector, leading to bacterial cell death and abortive phage infection. A clade A Pycsar system. Its function is as follows. The pyrimidine cyclase gene of a two-gene Pycsar system, generates cyclic UMP (cUMP) from UTP, has little to no activity on ATP, CTP or GTP. Expression of this and adjacent effector PaPycTIR (AC P0DV41) probably confers resistance to bacteriophage. The genes are probably only expressed in response to bacteriophage infection. Does not have adenylyl or guanylyl cyclase activity. This chain is Uridylate cyclase, found in Pseudomonas aeruginosa.